Reading from the N-terminus, the 305-residue chain is Olfactory receptor 4B13 (305 aa).

The Extracellular segment spans residues 1 to 25 (MANKNNVTELIFTGLFQDPEVQKVC). Asparagine 6 carries an N-linked (GlcNAc...) asparagine glycan. Residues 26–46 (FVLFLPVYLATLLGNSLILVA) form a helical membrane-spanning segment. The Cytoplasmic portion of the chain corresponds to 47–55 (VSISKTLHS). The helical transmembrane segment at 56–76 (PMYFFLSSLSLVEICYSSTIV) threads the bilayer. The Extracellular portion of the chain corresponds to 77–95 (PKFITDLLAKVKTISLKGC). A disulfide bridge links cysteine 95 with cysteine 187. Residues 96-116 (LTQIFFSHFFGVVEVILLVVM) form a helical membrane-spanning segment. Over 117–141 (AYDRYVAICKPLHYMNIMSRQVCHM) the chain is Cytoplasmic. Residues 142 to 162 (LVAGSWLGGFIHSIIQIIITI) form a helical membrane-spanning segment. Residues 163–202 (PLPFCGPNVIDHYFCDLQQLFKLACTDTFMEGFIVMANSG) lie on the Extracellular side of the membrane. Residues 203 to 223 (LISIVSLFILVSSYAVILISL) traverse the membrane as a helical segment. Over 224–236 (RKRSAEGRRKALS) the chain is Cytoplasmic. A helical transmembrane segment spans residues 237 to 257 (TCASHITVVILFFVPGAFIYM). Residues 258–266 (RPSSTFTED) lie on the Extracellular side of the membrane. Residues 267-287 (KLVSVFYTVITPMLNPIVYTL) form a helical membrane-spanning segment. Over 288–305 (RNTEMKNAIRMSWKQKDS) the chain is Cytoplasmic.

The protein belongs to the G-protein coupled receptor 1 family.

It localises to the cell membrane. In terms of biological role, odorant receptor. The sequence is that of Olfactory receptor 4B13 from Mus musculus (Mouse).